The primary structure comprises 228 residues: Ribulose-phosphate 3-epimerase (228 aa).

Ser12 serves as a coordination point for substrate. The a divalent metal cation site is built by His37, Asp39, and His70. The Proton acceptor role is filled by Asp39. Substrate contacts are provided by residues His70, 146–149, 176–178, and 198–199; these read GFGG, DGG, and GS. Asp176 contacts a divalent metal cation. Catalysis depends on Asp176, which acts as the Proton donor.

It belongs to the ribulose-phosphate 3-epimerase family. Requires a divalent metal cation as cofactor.

It catalyses the reaction D-ribulose 5-phosphate = D-xylulose 5-phosphate. It participates in carbohydrate degradation. Catalyzes the reversible epimerization of D-ribulose 5-phosphate to D-xylulose 5-phosphate. The protein is Ribulose-phosphate 3-epimerase of Rhodobacter capsulatus (Rhodopseudomonas capsulata).